The following is a 355-amino-acid chain: Elongation factor Ts (355 aa).

The interval 82–85 (TDFV) is involved in Mg(2+) ion dislocation from EF-Tu.

It belongs to the EF-Ts family.

It is found in the cytoplasm. Its function is as follows. Associates with the EF-Tu.GDP complex and induces the exchange of GDP to GTP. It remains bound to the aminoacyl-tRNA.EF-Tu.GTP complex up to the GTP hydrolysis stage on the ribosome. This is Elongation factor Ts (tsf) from Helicobacter pylori (strain J99 / ATCC 700824) (Campylobacter pylori J99).